A 162-amino-acid chain; its full sequence is Ciliary microtubule inner protein 5 (162 aa).

Residues methionine 1–glycine 44 form a disordered region.

It is found in the cell projection. The protein localises to the cilium. This Homo sapiens (Human) protein is Ciliary microtubule inner protein 5.